The primary structure comprises 102 residues: ATP-dependent Clp protease adapter protein ClpS (102 aa).

Belongs to the ClpS family. In terms of assembly, binds to the N-terminal domain of the chaperone ClpA.

Its function is as follows. Involved in the modulation of the specificity of the ClpAP-mediated ATP-dependent protein degradation. The polypeptide is ATP-dependent Clp protease adapter protein ClpS (Shewanella loihica (strain ATCC BAA-1088 / PV-4)).